Here is a 325-residue protein sequence, read N- to C-terminus: UPF0285 protein Mbar_A0208 (325 aa).

This sequence belongs to the UPF0285 family.

The sequence is that of UPF0285 protein Mbar_A0208 from Methanosarcina barkeri (strain Fusaro / DSM 804).